The chain runs to 149 residues: MSIEILNESGHPLDVKRLAALSRFVMDRMRVHPLAELCIKAVDEPTIAQLNEQWMEKAGPTDVLAFPMDELRPGLVDEDPEEGVLGDLVLCPDVAARQGETAGHGTEAEIELLTVHGILHLLGYDHAEPEEHREMFGLQDELLAAWRAR.

Residues H116, H120, and H126 each contribute to the Zn(2+) site.

This sequence belongs to the endoribonuclease YbeY family. Requires Zn(2+) as cofactor.

The protein localises to the cytoplasm. In terms of biological role, single strand-specific metallo-endoribonuclease involved in late-stage 70S ribosome quality control and in maturation of the 3' terminus of the 16S rRNA. This is Endoribonuclease YbeY from Nocardioides sp. (strain ATCC BAA-499 / JS614).